Reading from the N-terminus, the 921-residue chain is Isoleucine--tRNA ligase 1 (921 aa).

Positions 57 to 67 match the 'HIGH' region motif; sequence PYANGDIHMGH. Glu-552 is a binding site for L-isoleucyl-5'-AMP. A 'KMSKS' region motif is present at residues 593–597; the sequence is KMSKS. Lys-596 contributes to the ATP binding site. Positions 888, 891, 908, and 911 each coordinate Zn(2+).

The protein belongs to the class-I aminoacyl-tRNA synthetase family. IleS type 1 subfamily. Monomer. The cofactor is Zn(2+).

It is found in the cytoplasm. It catalyses the reaction tRNA(Ile) + L-isoleucine + ATP = L-isoleucyl-tRNA(Ile) + AMP + diphosphate. Its function is as follows. Catalyzes the attachment of isoleucine to tRNA(Ile). As IleRS can inadvertently accommodate and process structurally similar amino acids such as valine, to avoid such errors it has two additional distinct tRNA(Ile)-dependent editing activities. One activity is designated as 'pretransfer' editing and involves the hydrolysis of activated Val-AMP. The other activity is designated 'posttransfer' editing and involves deacylation of mischarged Val-tRNA(Ile). This Bacillus cereus (strain ATCC 10987 / NRS 248) protein is Isoleucine--tRNA ligase 1.